Consider the following 138-residue polypeptide: Putative pre-16S rRNA nuclease (138 aa).

The protein belongs to the YqgF nuclease family.

The protein localises to the cytoplasm. Its function is as follows. Could be a nuclease involved in processing of the 5'-end of pre-16S rRNA. This Enterobacter sp. (strain 638) protein is Putative pre-16S rRNA nuclease.